Consider the following 315-residue polypeptide: Thymidylate synthase (315 aa).

DUMP is bound by residues arginine 29 and 156 to 157 (RR). Cysteine 176 acts as the Nucleophile in catalysis. Residues 213-216 (RSCD), asparagine 224, and 254-256 (HVY) each bind dUMP. A (6R)-5,10-methylene-5,6,7,8-tetrahydrofolate-binding site is contributed by aspartate 216.

It belongs to the thymidylate synthase family. In terms of assembly, homodimer.

It carries out the reaction dUMP + (6R)-5,10-methylene-5,6,7,8-tetrahydrofolate = 7,8-dihydrofolate + dTMP. It participates in pyrimidine metabolism; dTTP biosynthesis. The protein is Thymidylate synthase (TMP1) of Candida albicans (strain SC5314 / ATCC MYA-2876) (Yeast).